The primary structure comprises 257 residues: MLAVLSPAKRLAARPALDLPADLAPSEPRLQDQADALARVARDLTAADLRRLMHISEPLARLNVARFAEFHEARNAAVPAVALFDGDTYAGLEARTMDADALRWAQERICILSGLYGLLRPLDRIQPHRLEMGTRLATERGATLYDFWGDRIAEALNARAAETGARVLVNCASVEYFTAADRAALKLPVITPTFLEERNGERKVVSFWAKRARGAMARFIAENRLDDPEDLRAFRAGGYAYEPDLSTDERPVFLRAG.

This sequence belongs to the UPF0246 family.

The chain is UPF0246 protein Rsph17029_0026 from Cereibacter sphaeroides (strain ATCC 17029 / ATH 2.4.9) (Rhodobacter sphaeroides).